Here is a 129-residue protein sequence, read N- to C-terminus: UPF0325 protein YE3288 (129 aa).

The protein belongs to the UPF0325 family.

The polypeptide is UPF0325 protein YE3288 (Yersinia enterocolitica serotype O:8 / biotype 1B (strain NCTC 13174 / 8081)).